A 126-amino-acid polypeptide reads, in one-letter code: Aspartate 1-decarboxylase 1 (126 aa).

Ser-25 (schiff-base intermediate with substrate; via pyruvic acid) is an active-site residue. Ser-25 is subject to Pyruvic acid (Ser). Thr-57 is a substrate binding site. Tyr-58 serves as the catalytic Proton donor. 73–75 lines the substrate pocket; it reads GSA.

The protein belongs to the PanD family. In terms of assembly, heterooctamer of four alpha and four beta subunits. It depends on pyruvate as a cofactor. Post-translationally, is synthesized initially as an inactive proenzyme, which is activated by self-cleavage at a specific serine bond to produce a beta-subunit with a hydroxyl group at its C-terminus and an alpha-subunit with a pyruvoyl group at its N-terminus.

The protein resides in the cytoplasm. It catalyses the reaction L-aspartate + H(+) = beta-alanine + CO2. It functions in the pathway cofactor biosynthesis; (R)-pantothenate biosynthesis; beta-alanine from L-aspartate: step 1/1. Functionally, catalyzes the pyruvoyl-dependent decarboxylation of aspartate to produce beta-alanine. This is Aspartate 1-decarboxylase 1 from Polaromonas sp. (strain JS666 / ATCC BAA-500).